Consider the following 285-residue polypeptide: Biotin synthase (285 aa).

The Radical SAM core domain maps to 2-223 (STRKQIFLCA…RRAHTLLGED (222 aa)). 3 residues coordinate [4Fe-4S] cluster: cysteine 20, cysteine 24, and cysteine 27. Residues cysteine 64, cysteine 99, and cysteine 157 each coordinate [2Fe-2S] cluster.

Belongs to the radical SAM superfamily. Biotin synthase family. In terms of assembly, homodimer. [4Fe-4S] cluster is required as a cofactor. It depends on [2Fe-2S] cluster as a cofactor.

It catalyses the reaction (4R,5S)-dethiobiotin + (sulfur carrier)-SH + 2 reduced [2Fe-2S]-[ferredoxin] + 2 S-adenosyl-L-methionine = (sulfur carrier)-H + biotin + 2 5'-deoxyadenosine + 2 L-methionine + 2 oxidized [2Fe-2S]-[ferredoxin]. It functions in the pathway cofactor biosynthesis; biotin biosynthesis; biotin from 7,8-diaminononanoate: step 2/2. Functionally, catalyzes the conversion of dethiobiotin (DTB) to biotin by the insertion of a sulfur atom into dethiobiotin via a radical-based mechanism. The protein is Biotin synthase of Sulfurovum sp. (strain NBC37-1).